A 491-amino-acid polypeptide reads, in one-letter code: Probable cytosol aminopeptidase (491 aa).

Residues lysine 260 and aspartate 265 each coordinate Mn(2+). The active site involves lysine 272. Positions 284, 343, and 345 each coordinate Mn(2+). Arginine 347 is a catalytic residue.

This sequence belongs to the peptidase M17 family. Mn(2+) serves as cofactor.

The protein localises to the cytoplasm. The enzyme catalyses Release of an N-terminal amino acid, Xaa-|-Yaa-, in which Xaa is preferably Leu, but may be other amino acids including Pro although not Arg or Lys, and Yaa may be Pro. Amino acid amides and methyl esters are also readily hydrolyzed, but rates on arylamides are exceedingly low.. It carries out the reaction Release of an N-terminal amino acid, preferentially leucine, but not glutamic or aspartic acids.. Functionally, presumably involved in the processing and regular turnover of intracellular proteins. Catalyzes the removal of unsubstituted N-terminal amino acids from various peptides. The sequence is that of Probable cytosol aminopeptidase from Trichormus variabilis (strain ATCC 29413 / PCC 7937) (Anabaena variabilis).